We begin with the raw amino-acid sequence, 397 residues long: Tryptophan synthase beta chain (397 aa).

The residue at position 87 (lysine 87) is an N6-(pyridoxal phosphate)lysine.

It belongs to the TrpB family. In terms of assembly, tetramer of two alpha and two beta chains. The cofactor is pyridoxal 5'-phosphate.

The enzyme catalyses (1S,2R)-1-C-(indol-3-yl)glycerol 3-phosphate + L-serine = D-glyceraldehyde 3-phosphate + L-tryptophan + H2O. It participates in amino-acid biosynthesis; L-tryptophan biosynthesis; L-tryptophan from chorismate: step 5/5. In terms of biological role, the beta subunit is responsible for the synthesis of L-tryptophan from indole and L-serine. This chain is Tryptophan synthase beta chain, found in Cronobacter sakazakii (strain ATCC BAA-894) (Enterobacter sakazakii).